The sequence spans 366 residues: Cytochrome c mitochondrial import factor CYC2 (366 aa).

The transit peptide at 1–50 directs the protein to the mitochondrion; that stretch reads MLWKNYVLSSSRITRRLHKSPRKSSFSKNFFITGCLLTVGAVSSYLTYRY. The FAD-binding FR-type domain occupies 63 to 184; that stretch reads SYFVKYKISH…RGPFIDYEFP (122 aa).

Requires FAD as cofactor.

Its subcellular location is the mitochondrion inner membrane. Functionally, redox component that participates in c-type cytochrome biogenesis in the mitochondrial intermembrane space. May play a role in the reduction of heme prior to its ligation to apocytochrome c by cytochrome c heme lyase. Has oxidoreductase activity in vitro. This chain is Cytochrome c mitochondrial import factor CYC2 (CYC2), found in Saccharomyces cerevisiae (strain ATCC 204508 / S288c) (Baker's yeast).